Reading from the N-terminus, the 387-residue chain is EARP-interacting protein homolog (387 aa).

WD repeat units follow at residues 132–172 (TAHG…SKAV), 182–222 (KGQL…QIYC), 226–266 (AHGQ…DPVK), 270–310 (EHSH…SEPF), and 345–385 (EHED…KYHI).

Belongs to the WD repeat EIPR1 family.

The polypeptide is EARP-interacting protein homolog (Gekko japonicus (Schlegel's Japanese gecko)).